A 414-amino-acid polypeptide reads, in one-letter code: Glutamyl-tRNA reductase (414 aa).

Residues 49 to 52 (TCNR), S108, 113 to 115 (EPQ), and Q119 contribute to the substrate site. Residue C50 is the Nucleophile of the active site. 188 to 193 (GAGQTG) contributes to the NADP(+) binding site.

The protein belongs to the glutamyl-tRNA reductase family. In terms of assembly, homodimer.

The catalysed reaction is (S)-4-amino-5-oxopentanoate + tRNA(Glu) + NADP(+) = L-glutamyl-tRNA(Glu) + NADPH + H(+). Its pathway is porphyrin-containing compound metabolism; protoporphyrin-IX biosynthesis; 5-aminolevulinate from L-glutamyl-tRNA(Glu): step 1/2. Functionally, catalyzes the NADPH-dependent reduction of glutamyl-tRNA(Glu) to glutamate 1-semialdehyde (GSA). In Francisella philomiragia subsp. philomiragia (strain ATCC 25017 / CCUG 19701 / FSC 153 / O#319-036), this protein is Glutamyl-tRNA reductase.